Here is a 417-residue protein sequence, read N- to C-terminus: 3-ketoacyl-CoA thiolase, peroxisomal (417 aa).

Residues Met1–Ser15 constitute a peroxisome transit peptide. The PTS2-type peroxisomal targeting signal stretch occupies residues Met1–Ser15. Cys125 functions as the Acyl-thioester intermediate in the catalytic mechanism. Active-site proton acceptor residues include His375 and Cys403.

Belongs to the thiolase-like superfamily. Thiolase family. In terms of assembly, homodimer. Interacts (via PTS2-type peroxisomal targeting signal region) with PEX7; leading to its translocation into peroxisomes.

The protein localises to the peroxisome. Its subcellular location is the mitochondrion intermembrane space. The enzyme catalyses an acyl-CoA + acetyl-CoA = a 3-oxoacyl-CoA + CoA. Its pathway is lipid metabolism; fatty acid metabolism. Responsible for the thiolytic cleavage of straight chain 3-keto fatty acyl-CoAs (3-oxoacyl-CoAs). This chain is 3-ketoacyl-CoA thiolase, peroxisomal (POT1), found in Saccharomyces cerevisiae (strain ATCC 204508 / S288c) (Baker's yeast).